A 376-amino-acid chain; its full sequence is 26S proteasome non-ATPase regulatory subunit 13 (376 aa).

Positions 171–338 (SYYKDALRFL…KRVHMTWVQP (168 aa)) constitute a PCI domain.

The protein belongs to the proteasome subunit S11 family. In terms of assembly, component of the 19S proteasome regulatory particle complex. The 26S proteasome consists of a 20S core particle (CP) and two 19S regulatory subunits (RP). The regulatory particle is made of a lid composed of 9 subunits including PSMD13, a base containing 6 ATPases and few additional components.

Its function is as follows. Component of the 26S proteasome, a multiprotein complex involved in the ATP-dependent degradation of ubiquitinated proteins. This complex plays a key role in the maintenance of protein homeostasis by removing misfolded or damaged proteins, which could impair cellular functions, and by removing proteins whose functions are no longer required. Therefore, the proteasome participates in numerous cellular processes, including cell cycle progression, apoptosis, or DNA damage repair. This is 26S proteasome non-ATPase regulatory subunit 13 (PSMD13) from Bos taurus (Bovine).